Reading from the N-terminus, the 368-residue chain is 2-oxoglutarate-dependent dioxygenase frbJ (368 aa).

The Fe2OG dioxygenase domain maps to 171-277 (QQHKLKIVKY…RYSIPFFQGV (107 aa)). Positions 198, 200, and 256 each coordinate Fe cation. Residue R268 coordinates 2-oxoglutarate.

This sequence belongs to the iron/ascorbate-dependent oxidoreductase family.

Its pathway is antifungal biosynthesis. In terms of biological role, 2-oxoglutarate-dependent dioxygenase; part of the gene cluster that mediates the biosynthesis of the antifungal antibiotic FR901469, an inhibitor of beta-1,3-glucansynthase, exerting antifungal activity against the pathogenes Candida albicans and Aspergillus fumigatus. FR901469 is a cyclic depsipeptide containing 12 amino acid residues and a fatty acid chain. The NRPS frbI contains 12 modules responsible for the formation of the depsipeptide backbone which is denoted as Acyl-Thr-Ala-Tyr-Val-4OHPro-Thr-Thr-3OHPro-threo3OHGln-Gly-Thr-Orn-OH (C71H116N14O23). The PKS frbB is probably involved in the production of the hydrocarbon chain, and the acyl-CoA ligase frbC might be involved in the transport of the chain to the peptide ptoduct of frbI. Because FR901469 contains 3 hydroxylated amino acid residues, the 3 oxygenases frbA, frbH, and frbJ might be participating in amino acid hydroxylation. As no thioesterase domains were detected in frbI or frbB, the thioesterases frbD and frbE may instead release and cyclize the products of the NRPS and PKS, respectively. The chain is 2-oxoglutarate-dependent dioxygenase frbJ from Dothideomycetidae sp. (strain 11243) (Fungal sp. (strain No.11243)).